We begin with the raw amino-acid sequence, 969 residues long: RNA polymerase-associated protein RapA (969 aa).

The 171-residue stretch at 164 to 334 (EVGRRHAPRV…FARLRLLDPD (171 aa)) folds into the Helicase ATP-binding domain. 177-184 (DEVGLGKT) provides a ligand contact to ATP. Positions 280 to 283 (DEAH) match the DEAH box motif. The Helicase C-terminal domain maps to 492–646 (RVNWLLEKVK…TCPTGRAVYD (155 aa)).

Belongs to the SNF2/RAD54 helicase family. RapA subfamily. In terms of assembly, interacts with the RNAP. Has a higher affinity for the core RNAP than for the holoenzyme. Its ATPase activity is stimulated by binding to RNAP.

Functionally, transcription regulator that activates transcription by stimulating RNA polymerase (RNAP) recycling in case of stress conditions such as supercoiled DNA or high salt concentrations. Probably acts by releasing the RNAP, when it is trapped or immobilized on tightly supercoiled DNA. Does not activate transcription on linear DNA. Probably not involved in DNA repair. This chain is RNA polymerase-associated protein RapA, found in Vibrio campbellii (strain ATCC BAA-1116).